Here is a 147-residue protein sequence, read N- to C-terminus: Deoxyuridine 5'-triphosphate nucleotidohydrolase (147 aa).

Arg-24 lines the Mg(2+) pocket. DUTP-binding positions include 68-70, 82-85, Tyr-88, Gly-93, Ile-95, and Arg-111; these read PRS and GVID.

The protein belongs to the dUTPase family. It depends on Mg(2+) as a cofactor.

The enzyme catalyses dUTP + H2O = dUMP + diphosphate + H(+). In terms of biological role, this enzyme is involved in nucleotide metabolism: it produces dUMP, the immediate precursor of thymidine nucleotides and it decreases the intracellular concentration of dUTP so that uracil cannot be incorporated into DNA. This is Deoxyuridine 5'-triphosphate nucleotidohydrolase (OPG046) from Homo sapiens (Human).